A 473-amino-acid polypeptide reads, in one-letter code: G2/mitotic-specific cyclin-1 (473 aa).

Positions 1–12 are enriched in polar residues; sequence MGSRNIVQQQNR. Disordered regions lie at residues 1-23 and 134-155; these read MGSR…AMKQ and KEKP…APTL. Residues 134–147 show a composition bias toward basic and acidic residues; sequence KEKPIEKEKAAEKS.

Belongs to the cyclin family. Cyclin AB subfamily. In terms of assembly, interacts with the CDC2 and CDK2 protein kinases to form a serine/threonine kinase holoenzyme complex. The cyclin subunit imparts substrate specificity to the complex.

In terms of biological role, essential for the control of the cell cycle at the G2/M (mitosis) transition. G2/M cyclins accumulate steadily during G2 and are abruptly destroyed at mitosis. This chain is G2/mitotic-specific cyclin-1, found in Antirrhinum majus (Garden snapdragon).